A 217-amino-acid polypeptide reads, in one-letter code: Uracil-DNA glycosylase (217 aa).

Residue D62 is the Proton acceptor of the active site.

The protein belongs to the uracil-DNA glycosylase (UDG) superfamily. UNG family.

The protein resides in the cytoplasm. It catalyses the reaction Hydrolyzes single-stranded DNA or mismatched double-stranded DNA and polynucleotides, releasing free uracil.. Functionally, excises uracil residues from the DNA which can arise as a result of misincorporation of dUMP residues by DNA polymerase or due to deamination of cytosine. In Streptococcus pyogenes serotype M4 (strain MGAS10750), this protein is Uracil-DNA glycosylase.